Reading from the N-terminus, the 598-residue chain is 4-coumarate--CoA ligase-like 6 (598 aa).

ATP-binding residues include Ser232, Ser233, Gly234, Thr235, Thr236, and Lys240. Arg318 contributes to the CoA binding site. The segment at 320–389 (DLAAAARAVE…TVFPSVQIVQ (70 aa)) is SBD1. The (E)-4-coumaroyl-AMP site is built by Gly367, Gln389, and Thr394. ATP is bound by residues Gln389, Thr394, Asp475, and Arg490. The SBD2 stretch occupies residues 390–454 (SYGLTESTGP…IRGPVVMKGY (65 aa)). 2 residues coordinate (E)-4-coumaroyl-AMP: Lys492 and Lys496. CoA is bound by residues Lys498 and Gly499. An ATP-binding site is contributed by Lys581.

Belongs to the ATP-dependent AMP-binding enzyme family. Requires Mg(2+) as cofactor.

It carries out the reaction (E)-4-coumarate + ATP + CoA = (E)-4-coumaroyl-CoA + AMP + diphosphate. The enzyme catalyses (E)-4-coumarate + ATP + H(+) = (E)-4-coumaroyl-AMP + diphosphate. The catalysed reaction is (E)-4-coumaroyl-AMP + CoA = (E)-4-coumaroyl-CoA + AMP + H(+). Carboxylate--CoA ligase that may use 4-coumarate as substrate. Follows a two-step reaction mechanism, wherein the carboxylate substrate first undergoes adenylation by ATP, followed by a thioesterification in the presence of CoA to yield the final CoA thioester. This Oryza sativa subsp. japonica (Rice) protein is 4-coumarate--CoA ligase-like 6 (4CLL6).